The primary structure comprises 813 residues: Leucine--tRNA ligase (813 aa).

The 'HIGH' region signature appears at 42-52 (PYTSGNLHIGH). The 'KMSKS' region signature appears at 580–584 (KMSKS). Lysine 583 contributes to the ATP binding site.

It belongs to the class-I aminoacyl-tRNA synthetase family.

It localises to the cytoplasm. It catalyses the reaction tRNA(Leu) + L-leucine + ATP = L-leucyl-tRNA(Leu) + AMP + diphosphate. The protein is Leucine--tRNA ligase of Dehalococcoides mccartyi (strain ATCC BAA-2266 / KCTC 15142 / 195) (Dehalococcoides ethenogenes (strain 195)).